The chain runs to 571 residues: Probable pectinesterase/pectinesterase inhibitor 58 (571 aa).

The N-terminal stretch at 1-28 (MGVDGELKKKKCIIAGVITALLVLMVVA) is a signal peptide. 4 N-linked (GlcNAc...) asparagine glycosylation sites follow: N36, N91, N207, and N216. The interval 49–204 (KTATTAVEAV…RELTSNGLAM (156 aa)) is pectinesterase inhibitor 58. Residues 259 to 556 (NVVVAHDGSG…FTPARFLRGN (298 aa)) form a pectinesterase 58 region. T335 contributes to the substrate binding site. N-linked (GlcNAc...) asparagine glycosylation occurs at N347. Q365 contacts substrate. The Proton donor; for pectinesterase activity role is filled by D388. A disulfide bridge links C402 with C422. Catalysis depends on D409, which acts as the Nucleophile; for pectinesterase activity. The substrate site is built by R477 and W479.

The protein in the N-terminal section; belongs to the PMEI family. It in the C-terminal section; belongs to the pectinesterase family. In terms of tissue distribution, expressed in siliques, but not in flower buds.

The protein resides in the secreted. It is found in the cell wall. It catalyses the reaction [(1-&gt;4)-alpha-D-galacturonosyl methyl ester](n) + n H2O = [(1-&gt;4)-alpha-D-galacturonosyl](n) + n methanol + n H(+). It functions in the pathway glycan metabolism; pectin degradation; 2-dehydro-3-deoxy-D-gluconate from pectin: step 1/5. Its function is as follows. Acts in the modification of cell walls via demethylesterification of cell wall pectin. The sequence is that of Probable pectinesterase/pectinesterase inhibitor 58 (PME58) from Arabidopsis thaliana (Mouse-ear cress).